A 505-amino-acid chain; its full sequence is Maturase K (505 aa).

Belongs to the intron maturase 2 family. MatK subfamily.

It is found in the plastid. The protein resides in the chloroplast. Usually encoded in the trnK tRNA gene intron. Probably assists in splicing its own and other chloroplast group II introns. The sequence is that of Maturase K from Apocynum androsaemifolium (Spreading dogbane).